The primary structure comprises 695 residues: Interleukin-1 receptor accessory protein-like 1 (695 aa).

The N-terminal stretch at 1 to 24 (MKAPIPHLILLYATFTQSLKVVTK) is a signal peptide. The region spanning 25–134 (RGSADGCTDW…YCMKVSISLT (110 aa)) is the Ig-like C2-type 1 domain. Residues 25-357 (RGSADGCTDW…LLHKRELMYT (333 aa)) are Extracellular-facing. 2 disulfides stabilise this stretch: Cys31/Cys126 and Cys53/Cys118. Asn63, Asn122, and Asn138 each carry an N-linked (GlcNAc...) asparagine glycan. Cystine bridges form between Cys143/Cys185 and Cys164/Cys216. 2 Ig-like C2-type domains span residues 143 to 232 (CYNS…TELT) and 242 to 350 (PKLL…VLLH). Asn213, Asn264, and Asn331 each carry an N-linked (GlcNAc...) asparagine glycan. Cys267 and Cys334 are disulfide-bonded. A helical membrane pass occupies residues 358-378 (VELAGGLGAILLLLICSVTIY). Topologically, residues 379–695 (KCYKIEIMLF…RETSISSVIW (317 aa)) are cytoplasmic. Positions 403 to 558 (KDYDAYLSYT…KFWKRLQYEM (156 aa)) constitute a TIR domain. Glu490 is an active-site residue. An interaction with NCS1 region spans residues 548-643 (SKFWKRLQYE…TGTLPLTSIG (96 aa)). The interval 657 to 679 (NGQRPQTKSNREPNPDEAHTNSA) is disordered. A compositionally biased stretch (basic and acidic residues) spans 665-675 (SNREPNPDEAH).

Belongs to the interleukin-1 receptor family. In terms of assembly, homodimer. Interacts (calcium-independent) with NCS1/FREQ. Interacts (via the first immunoglobilin domain) with PTPRD (via the second immunoglobilin domain); this interaction is PTPRD-splicing-dependent and induces pre- and post-synaptic differentiation of neurons and is required for IL1RAPL1-mediated synapse formation. As to expression, detected in total brain extracts, olfactory bulb, hippocampus and striatum (at protein level).

It localises to the cell membrane. The protein localises to the cytoplasm. The protein resides in the cell projection. Its subcellular location is the axon. It is found in the dendrite. It catalyses the reaction NAD(+) + H2O = ADP-D-ribose + nicotinamide + H(+). Its function is as follows. May regulate secretion and presynaptic differentiation through inhibition of the activity of N-type voltage-gated calcium channel. May activate the MAP kinase JNK. Plays a role in neurite outgrowth. During dendritic spine formation can bidirectionally induce pre- and post-synaptic differentiation of neurons by trans-synaptically binding to PTPRD. The polypeptide is Interleukin-1 receptor accessory protein-like 1 (Il1rapl1) (Mus musculus (Mouse)).